The sequence spans 446 residues: Argininosuccinate lyase (446 aa).

Belongs to the lyase 1 family. Argininosuccinate lyase subfamily.

It localises to the cytoplasm. It carries out the reaction 2-(N(omega)-L-arginino)succinate = fumarate + L-arginine. The protein operates within amino-acid biosynthesis; L-arginine biosynthesis; L-arginine from L-ornithine and carbamoyl phosphate: step 3/3. The chain is Argininosuccinate lyase from Phocaeicola vulgatus (strain ATCC 8482 / DSM 1447 / JCM 5826 / CCUG 4940 / NBRC 14291 / NCTC 11154) (Bacteroides vulgatus).